We begin with the raw amino-acid sequence, 239 residues long: Uridylate kinase (239 aa).

13-16 (KVSG) provides a ligand contact to ATP. Residue Gly55 participates in UMP binding. 2 residues coordinate ATP: Gly56 and Arg60. UMP is bound by residues Asp75 and 136 to 143 (TGNPFCTT). Positions 163, 164, 169, and 172 each coordinate ATP.

Belongs to the UMP kinase family. As to quaternary structure, homohexamer.

The protein resides in the cytoplasm. The catalysed reaction is UMP + ATP = UDP + ADP. It functions in the pathway pyrimidine metabolism; CTP biosynthesis via de novo pathway; UDP from UMP (UMPK route): step 1/1. Its activity is regulated as follows. Inhibited by UTP. Functionally, catalyzes the reversible phosphorylation of UMP to UDP. The sequence is that of Uridylate kinase from Rickettsia bellii (strain RML369-C).